We begin with the raw amino-acid sequence, 168 residues long: Photosystem I assembly protein Ycf3 (168 aa).

TPR repeat units follow at residues 35 to 68 (AFTY…EIDP), 72 to 105 (SYIL…NPFL), and 120 to 153 (GEQA…TPGN).

It belongs to the Ycf3 family.

It localises to the plastid. The protein resides in the chloroplast thylakoid membrane. Its function is as follows. Essential for the assembly of the photosystem I (PSI) complex. May act as a chaperone-like factor to guide the assembly of the PSI subunits. The protein is Photosystem I assembly protein Ycf3 of Atropa belladonna (Belladonna).